The chain runs to 134 residues: ATP synthase epsilon chain (134 aa).

This sequence belongs to the ATPase epsilon chain family. F-type ATPases have 2 components, CF(1) - the catalytic core - and CF(0) - the membrane proton channel. CF(1) has five subunits: alpha(3), beta(3), gamma(1), delta(1), epsilon(1). CF(0) has three main subunits: a, b and c.

The protein localises to the cell membrane. Functionally, produces ATP from ADP in the presence of a proton gradient across the membrane. The polypeptide is ATP synthase epsilon chain (Ruminiclostridium cellulolyticum (strain ATCC 35319 / DSM 5812 / JCM 6584 / H10) (Clostridium cellulolyticum)).